A 429-amino-acid polypeptide reads, in one-letter code: MSAKWEKQEGNIGTLTIEVPAAEVDAAMDQAFKKVVKQINVPGFRKGKMPRKMFEQRFGIESLYQDALEIIVPDSYAKAIDEAGIMPVDYPEIAGTENFVHGQDFSFTAQVTVKPEPKLGDYKGLEVAKLPVEVTDEEVDAQIQEQLARKAELEIKEDEAIVEGDTAVIDFEGFVGDEAFEGGKGEDYPLEIGSGSFIPGFEEQLTGVKAGESKDVVVTFPEEYHAAELAGKEATFKVTVKEVKTKVLPELNDEFAKELDSEVESVEALRAKIKEQTAAQKVAESDAALRDELVEKASENAEFEVPAGMINSETDRMLQEFGQRLQTQGMNLDLYYQFSGQSEEDLRGQMKEEAESRVRVSLTLEAIAEAEKIEATEADIEAELEKMAAQFNMTKEQITGALGGTAVLENDIKIQKTVEFLVENAKITE.

In terms of domain architecture, PPIase FKBP-type spans 164-249; that stretch reads GDTAVIDFEG…VKEVKTKVLP (86 aa).

Belongs to the FKBP-type PPIase family. Tig subfamily.

Its subcellular location is the cytoplasm. It carries out the reaction [protein]-peptidylproline (omega=180) = [protein]-peptidylproline (omega=0). Involved in protein export. Acts as a chaperone by maintaining the newly synthesized protein in an open conformation. Functions as a peptidyl-prolyl cis-trans isomerase. The protein is Trigger factor of Lysinibacillus sphaericus (strain C3-41).